The chain runs to 501 residues: Probable sucrose utilization protein SUC1 (501 aa).

The segment at residues 13-39 is a DNA-binding region (zn(2)-C6 fungal-type); the sequence is CDSCSFRKVKCDMKTPCSRCVLNNLKC.

It belongs to the MAL13 family.

It localises to the nucleus. Affects sucrose utilization and alpha-glucosidase activity. Probable transcriptional activator. The polypeptide is Probable sucrose utilization protein SUC1 (SUC1) (Candida albicans (strain SC5314 / ATCC MYA-2876) (Yeast)).